The primary structure comprises 793 residues: Calcium permeable stress-gated cation channel 1 (793 aa).

Residues 1 to 21 (MAFNGYGIFDSDPRKNPSSDL) are Lumenal-facing. Residues 22-42 (RTQFWLAFLLGASACVFFCFF) traverse the membrane as a helical segment. Topologically, residues 43-95 (RKRWKVLYAPRTTIEGLNLPTLSSSYYKWLMDLVNIPDDVVQNCAGLDGYVFL) are cytoplasmic. The chain crosses the membrane as a helical span at residues 96–116 (LFFKMGIKFLSFASLLGVLII). Residues 117–192 (MPVNKHFRGD…IPGLPQPGDG (76 aa)) are Lumenal-facing. The helical transmembrane segment at 193–213 (FLYLYVLFTYFISIFLLYVLF) threads the bilayer. Residues 214–444 (SSTKSIADIR…HKFFQGWFIT (231 aa)) lie on the Cytoplasmic side of the membrane. Residues 445–465 (LVTFMIILLWTVPVGAIAVFI) traverse the membrane as a helical segment. Topologically, residues 466–493 (NLDTIRRLWPELGRMIEDLPFLNSLLRT) are lumenal. Residues 494 to 514 (FLPTLVYSLFISISPFLFRWL) traverse the membrane as a helical segment. Topologically, residues 515 to 534 (SSMQGLSSRAEEEIYAVGKN) are cytoplasmic. The helical transmembrane segment at 535-555 (YAYLFVNFFLVYVIAGSTSIW) threads the bilayer. Topologically, residues 556 to 577 (ELAKDTTSFAHFLANRLPHQAQ) are lumenal. Residues 578–598 (FFIDLIVLQGIGMFPLKLIQL) traverse the membrane as a helical segment. Residues 599 to 646 (GKLSSYFVRRSFVPYSIASKKFETPDSFSVGIFLPQPMFIMLICLCYS) lie on the Cytoplasmic side of the membrane. The helical transmembrane segment at 647–667 (IISPLILVFGLIYFIIGFLVY) threads the bilayer. The Lumenal portion of the chain corresponds to 668–687 (KYELIYQMEHPQHSTGELWS). A helical transmembrane segment spans residues 688 to 708 (TIFLRMIFGCVIMQLTMMGLM). The Cytoplasmic portion of the chain corresponds to 709–713 (SLRKA). A helical transmembrane segment spans residues 714 to 734 (YWLSTVIFPLLCFTVISAYNF). Topologically, residues 735–793 (STMIRSSMQFVSLYYIRTHQSNTLSSESESRNSESSGSYVHPGFDLSNEELPLIDLNTA) are lumenal. Positions 759 to 778 (SSESESRNSESSGSYVHPGF) are disordered.

It belongs to the CSC1 (TC 1.A.17) family.

Its subcellular location is the vacuole membrane. Functionally, acts as an osmosensitive calcium-permeable cation channel. This chain is Calcium permeable stress-gated cation channel 1, found in Schizosaccharomyces pombe (strain 972 / ATCC 24843) (Fission yeast).